We begin with the raw amino-acid sequence, 512 residues long: ATP synthase subunit alpha (512 aa).

An ATP-binding site is contributed by 169-176; that stretch reads GDRQTGKT.

Belongs to the ATPase alpha/beta chains family. As to quaternary structure, F-type ATPases have 2 components, CF(1) - the catalytic core - and CF(0) - the membrane proton channel. CF(1) has five subunits: alpha(3), beta(3), gamma(1), delta(1), epsilon(1). CF(0) has three main subunits: a(1), b(2) and c(9-12). The alpha and beta chains form an alternating ring which encloses part of the gamma chain. CF(1) is attached to CF(0) by a central stalk formed by the gamma and epsilon chains, while a peripheral stalk is formed by the delta and b chains.

It localises to the cell inner membrane. It catalyses the reaction ATP + H2O + 4 H(+)(in) = ADP + phosphate + 5 H(+)(out). Its function is as follows. Produces ATP from ADP in the presence of a proton gradient across the membrane. The alpha chain is a regulatory subunit. This Rickettsia bellii (strain OSU 85-389) protein is ATP synthase subunit alpha.